Here is a 679-residue protein sequence, read N- to C-terminus: Stress-70 protein, mitochondrial (679 aa).

Residues Met1–Tyr46 constitute a mitochondrion transit peptide. Positions Met1–Val432 are interaction with NFS1. ADP-binding residues include Thr63 and Asn64. The interval Thr63–Asp431 is nucleotide-binding domain (NBD). Position 76 is an N6-acetyllysine (Lys76). Thr87 is modified (phosphothreonine). 2 positions are modified to N6-acetyllysine; alternate: Lys135 and Lys138. Residues Lys135 and Lys138 each carry the N6-succinyllysine; alternate modification. Position 143 is an N6-acetyllysine (Lys143). The residue at position 206 (Lys206) is an N6-acetyllysine; alternate. Lys206 is subject to N6-succinyllysine; alternate. Residue Lys206 is modified to N6-malonyllysine; alternate. Residues Lys234 and Lys288 each carry the N6-acetyllysine modification. Lys300 carries the N6-acetyllysine; alternate modification. Lys300 bears the N6-succinyllysine; alternate mark. Residues Glu313, Lys316, and Ser320 each contribute to the ADP site. Lys368 carries the post-translational modification N6-succinyllysine. Residues Gly388 and Arg391 each contribute to the ADP site. N6-succinyllysine is present on Lys394. Phosphoserine is present on Ser408. The interval Val432–Thr441 is interdomain linker. Residues Val432 to Gln679 are interaction with FXN and ISCU. The tract at residues Pro442–Gln679 is substrate-binding domain (SBD). Arg513 is subject to Omega-N-methylarginine. N6-acetyllysine; alternate is present on residues Lys567 and Lys600. Lys567 and Lys600 each carry N6-succinyllysine; alternate. Lys610 is subject to N6-succinyllysine. Lys612 carries the N6-acetyllysine modification. Residue Lys646 is modified to N6-acetyllysine; alternate. N6-succinyllysine; alternate is present on Lys646. The segment at Ala656–Gln679 is disordered. Residues Glu669–Gln679 show a composition bias toward basic and acidic residues.

It belongs to the heat shock protein 70 family. As to quaternary structure, interacts strongly with the intermediate form of FXN and weakly with its mature form. Interacts with HSCB. Associates with the mitochondrial contact site and cristae organizing system (MICOS) complex, composed of at least MICOS10/MIC10, CHCHD3/MIC19, CHCHD6/MIC25, APOOL/MIC27, IMMT/MIC60, APOO/MIC23/MIC26 and QIL1/MIC13. This complex was also known under the names MINOS or MitOS complex. The MICOS complex associates with mitochondrial outer membrane proteins SAMM50, MTX1, MTX2 and DNAJC11, mitochondrial inner membrane protein TMEM11 and with HSPA9. Interacts with DNLZ, the interaction is required to prevent self-aggregation. Interacts with TESPA1. Interacts with PDPN. Interacts with NFU1, NFS1 and ISCU. Interacts with TP53; the interaction promotes TP53 degradation. Interacts (via SBD domain) with UBXN2A; the interaction with UBXN2A inhibits HSPA9 interaction with and degradation of TP53, thereby promotes TP53 translocation to the nucleus. Interacts with ITPR1 AND VDAC1; this interaction couples ITPR1 to VDAC1. Component of the TIM23 mitochondrial inner membrane pre-sequence translocase complex.

The protein localises to the mitochondrion. It localises to the nucleus. The protein resides in the nucleolus. It is found in the cytoplasm. Its subcellular location is the mitochondrion matrix. It catalyses the reaction ATP + H2O = ADP + phosphate + H(+). The chaperone activity is regulated by ATP-induced allosteric coupling of the nucleotide-binding (NBD) and substrate-binding (SBD) domains. ATP binding in the NBD leads to a conformational change in the NBD, which is transferred through the interdomain linker (IDL) to the substrate-binding domain (SBD). This elicits a reduced substrate affinity and a faster substrate exchange rate. Upon hydrolysis of ATP to ADP, the protein undergoes a conformational change that increases its affinity for substrate proteins. It cycles through repeated phases of ATP hydrolysis and nucleotide exchange, facilitating repeated cycles of substrate binding and release. Functions in collaboration with co-chaperones. Functions with the co-chaperone, DNLZ, to maintain solubility and regulate ATP hydrolysis. Nucleotide exchange factors, GRPEL1 and GRPEL2, accelerate nucleotide exchange. Mitochondrial chaperone that plays a key role in mitochondrial protein import, folding, and assembly. Plays an essential role in the protein quality control system, the correct folding of proteins, the re-folding of misfolded proteins, and the targeting of proteins for subsequent degradation. These processes are achieved through cycles of ATP binding, ATP hydrolysis, and ADP release, mediated by co-chaperones. In mitochondria, it associates with the TIM (translocase of the inner membrane) protein complex to assist in the import and folding of mitochondrial proteins. Plays an important role in mitochondrial iron-sulfur cluster (ISC) biogenesis, interacts with and stabilizes ISC cluster assembly proteins FXN, NFU1, NFS1 and ISCU. Regulates erythropoiesis via stabilization of ISC assembly. Regulates mitochondrial calcium-dependent apoptosis by coupling two calcium channels, ITPR1 and VDAC1, at the mitochondria-associated endoplasmic reticulum (ER) membrane to facilitate calcium transport from the ER lumen to the mitochondria intermembrane space, providing calcium for the downstream calcium channel MCU, which releases it into the mitochondrial matrix. Although primarily located in the mitochondria, it is also found in other cellular compartments. In the cytosol, it associates with proteins involved in signaling, apoptosis, or senescence. It may play a role in cell cycle regulation via its interaction with and promotion of degradation of TP53. May play a role in the control of cell proliferation and cellular aging. Protects against reactive oxygen species (ROS). Extracellular HSPA9 plays a cytoprotective role by preventing cell lysis following immune attack by the membrane attack complex by disrupting formation of the complex. The sequence is that of Stress-70 protein, mitochondrial from Homo sapiens (Human).